Reading from the N-terminus, the 612-residue chain is U-box domain-containing protein 11 (612 aa).

Residues 127–196 (DEVGEQVELA…LHFGEEEEKQ (70 aa)) are a coiled coil. The U-box domain maps to 240–314 (TIPVDFLCPV…SRWCAEHNIE (75 aa)). 5 ARM repeats span residues 363–402 (TDNRILIAEAGAIPVLVNLLTSEDVATQENAITCVLNLSI), 404–443 (ENNKELIMFAGAVTSIVQVLRAGTMEARENAAATLFSLSL), 445–484 (DENKIIIGGSGAIPALVDLLENGTPRGKKDAATALFNLCI), 486–526 (HGNK…VLAN), and 528–567 (QDAKSAIVKANTLPALIGILQTDQTRNRENAAAILLSLCK).

It catalyses the reaction S-ubiquitinyl-[E2 ubiquitin-conjugating enzyme]-L-cysteine + [acceptor protein]-L-lysine = [E2 ubiquitin-conjugating enzyme]-L-cysteine + N(6)-ubiquitinyl-[acceptor protein]-L-lysine.. Its pathway is protein modification; protein ubiquitination. In terms of biological role, functions as an E3 ubiquitin ligase. In Arabidopsis thaliana (Mouse-ear cress), this protein is U-box domain-containing protein 11 (PUB11).